We begin with the raw amino-acid sequence, 603 residues long: DNA mismatch repair protein MutL (603 aa).

It belongs to the DNA mismatch repair MutL/HexB family.

In terms of biological role, this protein is involved in the repair of mismatches in DNA. It is required for dam-dependent methyl-directed DNA mismatch repair. May act as a 'molecular matchmaker', a protein that promotes the formation of a stable complex between two or more DNA-binding proteins in an ATP-dependent manner without itself being part of a final effector complex. The protein is DNA mismatch repair protein MutL of Rhodopseudomonas palustris (strain BisA53).